A 193-amino-acid chain; its full sequence is N-(5'-phosphoribosyl)anthranilate isomerase (193 aa).

It belongs to the TrpF family.

It carries out the reaction N-(5-phospho-beta-D-ribosyl)anthranilate = 1-(2-carboxyphenylamino)-1-deoxy-D-ribulose 5-phosphate. Its pathway is amino-acid biosynthesis; L-tryptophan biosynthesis; L-tryptophan from chorismate: step 3/5. The polypeptide is N-(5'-phosphoribosyl)anthranilate isomerase (Streptococcus mutans serotype c (strain ATCC 700610 / UA159)).